The following is a 446-amino-acid chain: tRNA-2-methylthio-N(6)-dimethylallyladenosine synthase (446 aa).

An MTTase N-terminal domain is found at 2-119 (KKIYIKTFGC…LPELIAQRRE (118 aa)). [4Fe-4S] cluster contacts are provided by C11, C48, C82, C156, C160, and C163. Residues 142–376 (RVEGGAAFVS…RIEAQAQGVN (235 aa)) form the Radical SAM core domain. Residues 377–440 (RSMVGSVQRV…PHSLRGEAVT (64 aa)) enclose the TRAM domain.

This sequence belongs to the methylthiotransferase family. MiaB subfamily. As to quaternary structure, monomer. It depends on [4Fe-4S] cluster as a cofactor.

The protein resides in the cytoplasm. It catalyses the reaction N(6)-dimethylallyladenosine(37) in tRNA + (sulfur carrier)-SH + AH2 + 2 S-adenosyl-L-methionine = 2-methylsulfanyl-N(6)-dimethylallyladenosine(37) in tRNA + (sulfur carrier)-H + 5'-deoxyadenosine + L-methionine + A + S-adenosyl-L-homocysteine + 2 H(+). Its function is as follows. Catalyzes the methylthiolation of N6-(dimethylallyl)adenosine (i(6)A), leading to the formation of 2-methylthio-N6-(dimethylallyl)adenosine (ms(2)i(6)A) at position 37 in tRNAs that read codons beginning with uridine. The chain is tRNA-2-methylthio-N(6)-dimethylallyladenosine synthase from Thiobacillus denitrificans (strain ATCC 25259 / T1).